Reading from the N-terminus, the 282-residue chain is ATP phosphoribosyltransferase (282 aa).

It belongs to the ATP phosphoribosyltransferase family. Long subfamily. Requires Mg(2+) as cofactor.

Its subcellular location is the cytoplasm. The catalysed reaction is 1-(5-phospho-beta-D-ribosyl)-ATP + diphosphate = 5-phospho-alpha-D-ribose 1-diphosphate + ATP. The protein operates within amino-acid biosynthesis; L-histidine biosynthesis; L-histidine from 5-phospho-alpha-D-ribose 1-diphosphate: step 1/9. With respect to regulation, feedback inhibited by histidine. In terms of biological role, catalyzes the condensation of ATP and 5-phosphoribose 1-diphosphate to form N'-(5'-phosphoribosyl)-ATP (PR-ATP). Has a crucial role in the pathway because the rate of histidine biosynthesis seems to be controlled primarily by regulation of HisG enzymatic activity. This Pyrobaculum aerophilum (strain ATCC 51768 / DSM 7523 / JCM 9630 / CIP 104966 / NBRC 100827 / IM2) protein is ATP phosphoribosyltransferase.